The following is a 35-amino-acid chain: Photosystem II reaction center protein T (35 aa).

Residues 3 to 23 traverse the membrane as a helical segment; that stretch reads ALVYTFLLVSTLGILFFAIFF.

The protein belongs to the PsbT family. In terms of assembly, PSII is composed of 1 copy each of membrane proteins PsbA, PsbB, PsbC, PsbD, PsbE, PsbF, PsbH, PsbI, PsbJ, PsbK, PsbL, PsbM, PsbT, PsbY, PsbZ, Psb30/Ycf12, at least 3 peripheral proteins of the oxygen-evolving complex and a large number of cofactors. It forms dimeric complexes.

It is found in the plastid. The protein localises to the chloroplast thylakoid membrane. Its function is as follows. Found at the monomer-monomer interface of the photosystem II (PS II) dimer, plays a role in assembly and dimerization of PSII. PSII is a light-driven water plastoquinone oxidoreductase, using light energy to abstract electrons from H(2)O, generating a proton gradient subsequently used for ATP formation. This Gnetum gnemon (Spanish joint-fir) protein is Photosystem II reaction center protein T.